The primary structure comprises 272 residues: Undecaprenyl-diphosphatase (272 aa).

7 helical membrane passes run 6 to 26 (SLLI…LPVS), 45 to 65 (AKTF…VMFW), 92 to 112 (THIL…HDVI), 115 to 135 (LFYP…LLAA), 189 to 209 (YAAS…ATVL), 225 to 245 (MFAV…KTFL), and 251 to 271 (ISFV…YMVF).

It belongs to the UppP family.

Its subcellular location is the cell inner membrane. It carries out the reaction di-trans,octa-cis-undecaprenyl diphosphate + H2O = di-trans,octa-cis-undecaprenyl phosphate + phosphate + H(+). Catalyzes the dephosphorylation of undecaprenyl diphosphate (UPP). Confers resistance to bacitracin. This chain is Undecaprenyl-diphosphatase, found in Pectobacterium carotovorum subsp. carotovorum (strain PC1).